Here is a 336-residue protein sequence, read N- to C-terminus: MTSSVIHQAVIDAYRVLDTGEPLDRETALRLAALPGDAVLDLASLAHKVRLRYAGEAASLHACSIMNAKSGECGENCRFCAQSRHNSASIDVYDLAGEDAVLRQAEEAVDSGIPHFGIVTSGYGYLKITPEFNRILGMIDMLHRELPGLNVCASLGVLGEETSAALAAHGIAHYNINIQVAPSRYSDLIADTHTVVERIATVRLLRKHRIPVCCGGILGVGESMTERLEMIFALSELDVSVIPLNVLVPIDGTPLEGHRTADIADIVKTFAICRLVHPRTIIKFAAGRETVMKDFQGLLMLSGANGFLTGGYLTTRGREIDADRELGRQLESFTEG.

In terms of domain architecture, Radical SAM core spans 55 to 288; the sequence is GEAASLHACS…RTIIKFAAGR (234 aa). The [4Fe-4S] cluster site is built by Cys-73, Cys-77, and Cys-80. The [2Fe-2S] cluster site is built by Cys-152, Cys-213, and Lys-283.

This sequence belongs to the radical SAM superfamily. Biotin synthase family. In terms of assembly, homodimer. [4Fe-4S] cluster serves as cofactor. It depends on [2Fe-2S] cluster as a cofactor.

It catalyses the reaction (4R,5S)-dethiobiotin + (sulfur carrier)-SH + 2 reduced [2Fe-2S]-[ferredoxin] + 2 S-adenosyl-L-methionine = (sulfur carrier)-H + biotin + 2 5'-deoxyadenosine + 2 L-methionine + 2 oxidized [2Fe-2S]-[ferredoxin]. It functions in the pathway cofactor biosynthesis; biotin biosynthesis; biotin from 7,8-diaminononanoate: step 2/2. Catalyzes the conversion of dethiobiotin (DTB) to biotin by the insertion of a sulfur atom into dethiobiotin via a radical-based mechanism. The polypeptide is Biotin synthase (Chlorobium limicola (strain DSM 245 / NBRC 103803 / 6330)).